An 850-amino-acid chain; its full sequence is MKFVKYFLILAVCCILLGAGSIYGLYRYIEPQLPDVATLKDVRLQIPMQIYSADGELIAQYGEKRRIPVTLDQIPPEMVKAFIATEDSRFYEHHGVDPVGIFRAASVALFSGHASQGASTITQQLARNFFLSPERTLMRKIKEVFLAIRIEQLLTKDEILELYLNKIYLGYRAYGVGAAAQVYFGKTVDQLTLNEMAVIAGLPKAPSTFNPLYSMDRAVARRNVVLSRMLDEGYITQQQFDQTRTEAINANYHAPEIAFSAPYLSEMVRQEMYNRYGESAYEDGYRIYTTITRKVQQAAQQAVRNNVLDYDMRHGYRGPANVLWKVGESAWDNNKITDTLKALPTYGPLLPAAVTSANPQQATAMLADGSTVALSMEGVRWARPYRSDTQQGPTPRKVTDVLQTGQQIWVRQVGDAWWLAQVPEVNSALVSINPQNGAVMALVGGFDFNQSKFNRATQALRQVGSNIKPFLYTAAMDKGLTLASMLNDVPISRWDASAGSDWQPKNSPPQYAGPIRLRQGLGQSKNVVMVRAMRAMGVDYAAEYLQRFGFPAQNIVHTESLALGSASFTPMQVARGYAVMANGGFLVDPWFISKIENDQGGVIFEAKPKVACPECDIPVIYGDTQKSNVLENNDVEDVAISREQQNVSVPMPQLEQANQALVAKTGAQEYAPHVINTPLAFLIKSALNTNIFGEPGWQGTGWRAGRDLQRRDIGGKTGTTNSSKDAWFSGYGPGVVTSVWIGFDDHRRNLGHTTASGAIKDQISGYEGGAKSAQPAWDAYMKAVLEGVPEQPLTPPPGIVTVNIDRSTGQLANGGNSREEYFIEGTQPTQQAVHEVGTTIIDNGEAQELF.

Residues 1–5 (MKFVK) lie on the Cytoplasmic side of the membrane. The chain crosses the membrane as a helical; Signal-anchor for type II membrane protein span at residues 6–26 (YFLILAVCCILLGAGSIYGLY). The Periplasmic segment spans residues 27–850 (RYIEPQLPDV…IDNGEAQELF (824 aa)). The interval 48–216 (MQIYSADGEL…STFNPLYSMD (169 aa)) is transglycosylase. Catalysis depends on E86, which acts as the Proton donor; for transglycosylase activity. The transpeptidase stretch occupies residues 400–710 (DVLQTGQQIW…GWRAGRDLQR (311 aa)). The active-site Acyl-ester intermediate; for transpeptidase activity is S465.

It in the N-terminal section; belongs to the glycosyltransferase 51 family. This sequence in the C-terminal section; belongs to the transpeptidase family.

It is found in the cell inner membrane. The enzyme catalyses [GlcNAc-(1-&gt;4)-Mur2Ac(oyl-L-Ala-gamma-D-Glu-L-Lys-D-Ala-D-Ala)](n)-di-trans,octa-cis-undecaprenyl diphosphate + beta-D-GlcNAc-(1-&gt;4)-Mur2Ac(oyl-L-Ala-gamma-D-Glu-L-Lys-D-Ala-D-Ala)-di-trans,octa-cis-undecaprenyl diphosphate = [GlcNAc-(1-&gt;4)-Mur2Ac(oyl-L-Ala-gamma-D-Glu-L-Lys-D-Ala-D-Ala)](n+1)-di-trans,octa-cis-undecaprenyl diphosphate + di-trans,octa-cis-undecaprenyl diphosphate + H(+). It catalyses the reaction Preferential cleavage: (Ac)2-L-Lys-D-Ala-|-D-Ala. Also transpeptidation of peptidyl-alanyl moieties that are N-acyl substituents of D-alanine.. Its pathway is cell wall biogenesis; peptidoglycan biosynthesis. Cell wall formation. Synthesis of cross-linked peptidoglycan from the lipid intermediates. The enzyme has a penicillin-insensitive transglycosylase N-terminal domain (formation of linear glycan strands) and a penicillin-sensitive transpeptidase C-terminal domain (cross-linking of the peptide subunits). This is Penicillin-binding protein 1A (mrcA) from Escherichia coli (strain K12).